A 155-amino-acid chain; its full sequence is MMKITILTVGKLGRMVEAQLALDYASRATASGRALALGPVDILEVEARKPGKAAEAEVLRPHLEGAYVVACDEHGKAWKSRAFADHLARLRDDGNRRVVFLIGGADGLDPSILAAANETMAFGVQTWPHALARAMLAEQIYRAATILSGSPYHRD.

G103 is an S-adenosyl-L-methionine binding site.

It belongs to the RNA methyltransferase RlmH family. As to quaternary structure, homodimer.

Its subcellular location is the cytoplasm. The catalysed reaction is pseudouridine(1915) in 23S rRNA + S-adenosyl-L-methionine = N(3)-methylpseudouridine(1915) in 23S rRNA + S-adenosyl-L-homocysteine + H(+). Its function is as follows. Specifically methylates the pseudouridine at position 1915 (m3Psi1915) in 23S rRNA. This is Ribosomal RNA large subunit methyltransferase H from Caulobacter vibrioides (strain ATCC 19089 / CIP 103742 / CB 15) (Caulobacter crescentus).